Consider the following 760-residue polypeptide: Prolyl endopeptidase FAP (760 aa).

Residues 1-4 (MKTW) are Cytoplasmic-facing. A helical; Signal-anchor for type II membrane protein membrane pass occupies residues 5-25 (LKIVFGVATSAVLALLVMCIV). Residues 26–760 (LRPSRVHNSE…FLKQCFSLSD (735 aa)) lie on the Extracellular side of the membrane. Asn49, Asn92, and Asn99 each carry an N-linked (GlcNAc...) asparagine glycan. Substrate contacts are provided by Glu203 and Glu204. 2 N-linked (GlcNAc...) asparagine glycosylation sites follow: Asn227 and Asn314. 3 disulfide bridges follow: Cys321–Cys332, Cys438–Cys441, and Cys448–Cys466. Residues 481 to 512 (TDQEIKILEDNKELENALKNIQLPKEEIKKLK) are a coiled coil. Ser624 acts as the Charge relay system in catalysis. Residues Cys643 and Cys755 are joined by a disulfide bond. N-linked (GlcNAc...) asparagine glycosylation occurs at Asn679. Catalysis depends on charge relay system residues Asp702 and His734.

It belongs to the peptidase S9B family. As to quaternary structure, homodimer; homodimerization is required for activity of both plasma membrane and soluble forms. The monomer is inactive. Heterodimer with DPP4. Interacts with PLAUR; the interaction occurs at the cell surface of invadopodia membranes. Interacts with ITGB1. Interacts with ITGA3. Associates with integrin alpha-3/beta-1; the association occurs in a collagen-dependent manner at the cell surface of invadopodia membranes. In terms of processing, N-glycosylated. The N-terminus may be blocked.

It localises to the cell surface. Its subcellular location is the cell membrane. It is found in the cell projection. The protein localises to the lamellipodium membrane. The protein resides in the invadopodium membrane. It localises to the ruffle membrane. Its subcellular location is the membrane. It is found in the secreted. The enzyme catalyses Release of an N-terminal dipeptide, Xaa-Yaa-|-Zaa-, from a polypeptide, preferentially when Yaa is Pro, provided Zaa is neither Pro nor hydroxyproline.. The catalysed reaction is Hydrolysis of Pro-|-Xaa &gt;&gt; Ala-|-Xaa in oligopeptides.. Gelatinase activity is inhibited by serine-protease inhibitors, such as phenylmethylsulfonyl fluoride (PMSF), 4-(2-aminoethyl)-benzenesulfonyl fluoride hydrochloride (AEBSF), 4-amidino phenylsulfonyl fluoride (APSF) and diisopropyl fluorophosphate (DFP), N-ethylmaleimide (NEM) and phenylmethylsulfonyl fluoride (PMSF). Dipeptidyl peptidase activity is inhibited by 2,2'-azino-bis(3-ethylbenzthiazoline-6-sulfonic acid), diisopropylfluorophosphate (DFP). Prolyl endopeptidase activity is inhibited by the boronic acid peptide Ac-Gly-BoroPro, Ac-Gly-Pro-chloromethyl ketone and Thr-Ser-Gly-chloromethyl ketone. In terms of biological role, cell surface glycoprotein serine protease that participates in extracellular matrix degradation and involved in many cellular processes including tissue remodeling, fibrosis, wound healing, inflammation and tumor growth. Both plasma membrane and soluble forms exhibit post-proline cleaving endopeptidase activity, with a marked preference for Ala/Ser-Gly-Pro-Ser/Asn/Ala consensus sequences, on substrate such as alpha-2-antiplasmin SERPINF2 and SPRY2. Degrade also gelatin, heat-denatured type I collagen, but not native collagen type I and IV, vibronectin, tenascin, laminin, fibronectin, fibrin or casein. Also has dipeptidyl peptidase activity, exhibiting the ability to hydrolyze the prolyl bond two residues from the N-terminus of synthetic dipeptide substrates provided that the penultimate residue is proline, with a preference for Ala-Pro, Ile-Pro, Gly-Pro, Arg-Pro and Pro-Pro. Natural neuropeptide hormones for dipeptidyl peptidase are the neuropeptide Y (NPY), peptide YY (PYY), substance P (TAC1) and brain natriuretic peptide 32 (NPPB). The plasma membrane form, in association with either DPP4, PLAUR or integrins, is involved in the pericellular proteolysis of the extracellular matrix (ECM), and hence promotes cell adhesion, migration and invasion through the ECM. Plays a role in tissue remodeling during development and wound healing. Participates in the cell invasiveness towards the ECM in malignant melanoma cancers. Enhances tumor growth progression by increasing angiogenesis, collagen fiber degradation and apoptosis and by reducing antitumor response of the immune system. Promotes glioma cell invasion through the brain parenchyma by degrading the proteoglycan brevican. Acts as a tumor suppressor in melanocytic cells through regulation of cell proliferation and survival in a serine protease activity-independent manner. The sequence is that of Prolyl endopeptidase FAP from Bos taurus (Bovine).